A 30-amino-acid polypeptide reads, in one-letter code: Cycloviolacin-O5 (30 aa).

Positions 1-30 (GTPCGESCVWIPCISSAVGCSCKNKVCYKN) form a cross-link, cyclopeptide (Gly-Asn). Cystine bridges form between C4/C20, C8/C22, and C13/C27.

In terms of processing, this is a cyclic peptide.

Its function is as follows. Probably participates in a plant defense mechanism. The polypeptide is Cycloviolacin-O5 (Viola odorata (Sweet violet)).